Consider the following 241-residue polypeptide: Triosephosphate isomerase (241 aa).

Residue Asn9–Lys11 participates in substrate binding. His96 (electrophile) is an active-site residue. Glu165 functions as the Proton acceptor in the catalytic mechanism. Substrate contacts are provided by residues Gly171, Ser204, and Gly225–Gly226.

It belongs to the triosephosphate isomerase family. In terms of assembly, homodimer.

The protein resides in the cytoplasm. The catalysed reaction is D-glyceraldehyde 3-phosphate = dihydroxyacetone phosphate. It participates in carbohydrate biosynthesis; gluconeogenesis. The protein operates within carbohydrate degradation; glycolysis; D-glyceraldehyde 3-phosphate from glycerone phosphate: step 1/1. Involved in the gluconeogenesis. Catalyzes stereospecifically the conversion of dihydroxyacetone phosphate (DHAP) to D-glyceraldehyde-3-phosphate (G3P). The chain is Triosephosphate isomerase from Acaryochloris marina (strain MBIC 11017).